Here is a 316-residue protein sequence, read N- to C-terminus: Methionyl-tRNA formyltransferase (316 aa).

Ser-112–Pro-115 contributes to the (6S)-5,6,7,8-tetrahydrofolate binding site.

It belongs to the Fmt family.

It catalyses the reaction L-methionyl-tRNA(fMet) + (6R)-10-formyltetrahydrofolate = N-formyl-L-methionyl-tRNA(fMet) + (6S)-5,6,7,8-tetrahydrofolate + H(+). Functionally, attaches a formyl group to the free amino group of methionyl-tRNA(fMet). The formyl group appears to play a dual role in the initiator identity of N-formylmethionyl-tRNA by promoting its recognition by IF2 and preventing the misappropriation of this tRNA by the elongation apparatus. This Flavobacterium psychrophilum (strain ATCC 49511 / DSM 21280 / CIP 103535 / JIP02/86) protein is Methionyl-tRNA formyltransferase.